A 660-amino-acid polypeptide reads, in one-letter code: Elongation factor 4 (660 aa).

Residues 55-241 (AQIRNFCIIA…EVVRQVPPPQ (187 aa)) form the tr-type G domain. Residues 67 to 72 (DHGKST) and 188 to 191 (NKID) each bind GTP.

It belongs to the TRAFAC class translation factor GTPase superfamily. Classic translation factor GTPase family. LepA subfamily.

Its subcellular location is the cell membrane. It carries out the reaction GTP + H2O = GDP + phosphate + H(+). Its function is as follows. Required for accurate and efficient protein synthesis under certain stress conditions. May act as a fidelity factor of the translation reaction, by catalyzing a one-codon backward translocation of tRNAs on improperly translocated ribosomes. Back-translocation proceeds from a post-translocation (POST) complex to a pre-translocation (PRE) complex, thus giving elongation factor G a second chance to translocate the tRNAs correctly. Binds to ribosomes in a GTP-dependent manner. This Mycolicibacterium paratuberculosis (strain ATCC BAA-968 / K-10) (Mycobacterium paratuberculosis) protein is Elongation factor 4.